Here is a 484-residue protein sequence, read N- to C-terminus: Glutamate--tRNA ligase (484 aa).

The short motif at 11-21 (PSPTGYLHIGN) is the 'HIGH' region element. The short motif at 252–256 (KLSKR) is the 'KMSKS' region element. Position 255 (lysine 255) interacts with ATP.

It belongs to the class-I aminoacyl-tRNA synthetase family. Glutamate--tRNA ligase type 1 subfamily. In terms of assembly, monomer.

The protein resides in the cytoplasm. It catalyses the reaction tRNA(Glu) + L-glutamate + ATP = L-glutamyl-tRNA(Glu) + AMP + diphosphate. In terms of biological role, catalyzes the attachment of glutamate to tRNA(Glu) in a two-step reaction: glutamate is first activated by ATP to form Glu-AMP and then transferred to the acceptor end of tRNA(Glu). This is Glutamate--tRNA ligase from Staphylococcus aureus (strain Newman).